The sequence spans 247 residues: Probable transcriptional regulatory protein MS0710 (247 aa).

Belongs to the TACO1 family.

It localises to the cytoplasm. The protein is Probable transcriptional regulatory protein MS0710 of Mannheimia succiniciproducens (strain KCTC 0769BP / MBEL55E).